We begin with the raw amino-acid sequence, 376 residues long: Proton extrusion protein PxcA (376 aa).

A run of 4 helical transmembrane segments spans residues Thr150 to Met170, Ala251 to Ile271, Ile299 to Leu319, and Phe334 to Ile354.

The protein belongs to the CemA family.

It is found in the cell inner membrane. In terms of biological role, required for H(+) efflux immediately after light irradiation to form a rapid H(+) concentration gradient across the thylakoid membranes. Together with PxcL, contributes to transient H(+) uptake following dark to light transition. This chain is Proton extrusion protein PxcA, found in Prochlorococcus marinus (strain MIT 9303).